A 151-amino-acid chain; its full sequence is Large ribosomal subunit protein uL22 (151 aa).

This sequence belongs to the universal ribosomal protein uL22 family. As to quaternary structure, part of the 50S ribosomal subunit.

In terms of biological role, this protein binds specifically to 23S rRNA. It makes multiple contacts with different domains of the 23S rRNA in the assembled 50S subunit and ribosome. The globular domain of the protein is located near the polypeptide exit tunnel on the outside of the subunit, while an extended beta-hairpin is found that lines the wall of the exit tunnel in the center of the 70S ribosome. This Thermofilum pendens (strain DSM 2475 / Hrk 5) protein is Large ribosomal subunit protein uL22.